The primary structure comprises 600 residues: Alpha-N-acetylgalactosaminide alpha-2,6-sialyltransferase 1 (600 aa).

Residues 1 to 14 (MRSCLWRCRHLSQG) lie on the Cytoplasmic side of the membrane. A helical; Signal-anchor for type II membrane protein transmembrane segment spans residues 15–35 (VQWSLLLAVLVFFLFALPSFI). The Lumenal segment spans residues 36–600 (KEPQTKPSRH…PGPGTAKAKN (565 aa)). 2 disordered regions span residues 38–191 (PQTK…AATT) and 208–248 (GAVS…TQRN). A compositionally biased stretch (basic and acidic residues) spans 46-55 (QRTENIKERS). 3 stretches are compositionally biased toward polar residues: residues 84–94 (NALNTQTQPKA), 151–179 (TEAQ…ASRT), and 209–219 (AVSTRTRQKGV). 2 disulfide bridges follow: Cys-279–Cys-362 and Cys-365–Cys-533. Residues Asn-300, Asn-311, Asn-331, Asn-375, and Asn-460 are each glycosylated (N-linked (GlcNAc...) asparagine).

Belongs to the glycosyltransferase 29 family. Post-translationally, glycosylated; autosialylated. As to expression, expression is restricted to the gastrointestinal tract. Highly expressed in goblet cells. Also expressed in various tumor cells.

The protein localises to the golgi apparatus membrane. The enzyme catalyses a beta-D-galactosyl-(1-&gt;3)-N-acetyl-alpha-D-galactosaminyl derivative + CMP-N-acetyl-beta-neuraminate = a beta-D-galactosyl-(1-&gt;3)-[N-acetyl-alpha-neuraminyl-(2-&gt;6)]-N-acetyl-alpha-D-galactosaminyl derivative + CMP + H(+). It carries out the reaction a 3-O-[N-acetyl-alpha-D-galactosaminyl]-L-seryl-[protein] + CMP-N-acetyl-beta-neuraminate = a 3-O-[N-acetyl-alpha-neuraminosyl-(2-&gt;6)-N-acetyl-alpha-D-galactosaminyl]-L-seryl-[protein] + CMP + H(+). The catalysed reaction is a 3-O-[N-acetyl-alpha-D-galactosaminyl]-L-threonyl-[protein] + CMP-N-acetyl-beta-neuraminate = a 3-O-[N-acetyl-alpha-neuraminosyl-(2-&gt;6)-N-acetyl-alpha-D-galactosaminyl]-L-threonyl-[protein] + CMP + H(+). It catalyses the reaction a 3-O-[beta-D-galactosyl-(1-&gt;3)-N-acetyl-alpha-D-galactosaminyl]-L-seryl-[protein] + CMP-N-acetyl-beta-neuraminate = a 3-O-{beta-D-galactosyl-(1-&gt;3)-[N-acetyl-alpha-neuraminosyl-(2-&gt;6)]-N-acetyl-alpha-D-galactosaminyl}-L-seryl-[protein] + CMP + H(+). The enzyme catalyses a 3-O-[beta-D-galactosyl-(1-&gt;3)-N-acetyl-alpha-D-galactosaminyl]-L-threonyl-[protein] + CMP-N-acetyl-beta-neuraminate = a 3-O-{beta-D-galactosyl-(1-&gt;3)-[N-acetyl-alpha-neuraminosyl-(2-&gt;6)]-N-acetyl-alpha-D-galactosaminyl}-L-threonyl-[protein] + CMP + H(+). It carries out the reaction a 3-O-[N-acetyl-alpha-neuraminyl-(2-&gt;3)-beta-D-galactosyl-(1-&gt;3)-N-acetyl-alpha-D-galactosaminyl]-L-threonyl-[protein] + CMP-N-acetyl-beta-neuraminate = a 3-O-{alpha-Neu5Ac-(2-&gt;3)-beta-D-Gal-(1-&gt;3)-[alpha-Neu5Ac-(2-&gt;6)]-alpha-D-GalNAc}-L-threonyl-[protein] + CMP + H(+). It functions in the pathway protein modification; protein glycosylation. Functionally, protein sialyltransferase specifically expressed in goblet cells that plays a key role in intestinal host-commensal homeostasis. Conjugates sialic acid with an alpha-2-6 linkage to N-acetylgalactosamine (GalNAc) glycan chains linked to serine or threonine in glycoproteins. Catalyzes the formation of the sialyl-Tn (S-Tn) antigen, an antigen found in intestinal goblet cells, as well as ulcerative colitis (UC) and various cancers. Protein sialylation in globlet cells is essential for mucus integrity and is required to protect the intestinal mucus against excessive bacterial proteolytic degradation. This is Alpha-N-acetylgalactosaminide alpha-2,6-sialyltransferase 1 from Homo sapiens (Human).